The primary structure comprises 305 residues: ATP synthase subunit gamma, mitochondrial (305 aa).

The protein belongs to the ATPase gamma chain family. F-type ATPases have 2 components, F(1) - the catalytic core - and F(o) - the membrane proton channel. F(1) has five subunits: alpha(3), beta(3), gamma(1), delta(1), epsilon(1), plus the additional subunit P18 (Tb427.05.1710) that is not present in F(1)F(o) ATP synthase from metazoa. Subunit P18 (Tb927.5.1710) interacts with the alpha subunit with a 1:1 stoichiometry; the interaction is direct. Subunit gamma is part of the central stalk. F(o) has three main subunits: a, b and c. The trypanosomal ATPase complex contains additional subunits that are not present in the F(1)F(o) ATP synthase from metazoa.

It is found in the mitochondrion. Its subcellular location is the mitochondrion inner membrane. Functionally, mitochondrial membrane ATP synthase (F(1)F(o) ATP synthase) produces ATP from ADP in the presence of a proton gradient across the membrane which is generated by electron transport complexes of the respiratory chain. F-type ATPases consist of two structural domains, F(1) - containing the extramembraneous catalytic core, and F(o) - containing the membrane proton channel, linked together by a central stalk and a peripheral stalk. During catalysis, ATP synthesis in the catalytic domain of F(1) is coupled via a rotary mechanism of the central stalk subunits to proton translocation. Subunits alpha and beta form the catalytic core in F(1). Rotation of the central stalk against the surrounding alpha(3)beta(3) subunits leads to hydrolysis of ATP in three separate catalytic sites on the beta subunits. Contrary to the procyclic, insect form that requires F(1)F(o) ATP synthase for ATP synthesis, the bloodstream form relies on ATP hydrolysis by F(1)F(o) ATP synthase to maintain its mitochondrial membrane potential. In Trypanosoma brucei brucei, this protein is ATP synthase subunit gamma, mitochondrial.